The primary structure comprises 599 residues: Growth factor receptor-bound protein 10 (599 aa).

The segment covering 1-23 (MNNDINSSVESLNSACNMQSDTD) has biased composition (polar residues). The segment at 1 to 122 (MNNDINSSVE…QPPAKHFPPG (122 aa)) is disordered. Residues 32–43 (QSASNQPSASSS) show a composition bias toward low complexity. A compositionally biased stretch (polar residues) spans 44–61 (RGQPQASPRQKMQRSQPV). The residue at position 50 (serine 50) is a Phosphoserine. The span at 97 to 118 (GSPPSVAPSSLPPPPSQPPAKH) shows a compositional bias: pro residues. Serine 98 is subject to Phosphoserine; by MTOR, MAPK1 and MAPK3. The region spanning 171–255 (LRKDVKVFSE…SKFLFRKNYA (85 aa)) is the Ras-associating domain. Residues 295–404 (CPEIQGFLQV…WMTAFRLLKY (110 aa)) form the PH domain. Serine 433 bears the Phosphoserine; by MTOR and PKB/AKT1 mark. Serine 436 is modified (phosphoserine). Residue serine 481 is modified to Phosphoserine; by MTOR, MAPK1 and MAPK3. One can recognise an SH2 domain in the interval 498–594 (WFHGRISREE…VLPCKLKHHC (97 aa)).

It belongs to the GRB7/10/14 family. In terms of assembly, interacts with ligand-activated tyrosine kinase receptors, including FGFR1, INSR, IGF1R, MET and PDGFRB in a phosphotyrosine-dependent manner through the SH2 domain. Poorly binds to the EGFR. Directly interacts with MAP3K14/NIK and is recruited to the EGFR-ERBB2 complex. Interacts with GIGYF1/PERQ1 and GIGYF2/TNRC15. When unphosphorylated, interacts with AKT1 and when phosphorylated with YWHAE/14-3-3 epsilon. Interacts with NEDD4. Interacts with LRP6, thus interfering with the binding of AXIN1 to LRP6. Binds relatively non-specifically to several phosphoinositides, including PI(5)P, PI(4,5)P2, PI(3,4)P2 and PI(3,4,5)P3, with modest affinities through the PH domain. Binds to activated NRAS. Phosphorylated on serine residues upon EGF, FGF and PDGF stimulation.

It is found in the cytoplasm. Phosphorylation by mTORC1 stabilizes and activates GRB10 constituting a feedback pathway by which mTORC1 inhibits INSR-dependent signaling. Adapter protein which modulates coupling of a number of cell surface receptor kinases with specific signaling pathways. Binds to, and suppress signals from, activated receptors tyrosine kinases, including the insulin (INSR) and insulin-like growth factor (IGF1R) receptors. The inhibitory effect can be achieved by 2 mechanisms: interference with the signaling pathway and increased receptor degradation. Delays and reduces AKT1 phosphorylation in response to insulin stimulation. Blocks association between INSR and IRS1 and IRS2 and prevents insulin-stimulated IRS1 and IRS2 tyrosine phosphorylation. Recruits NEDD4 to IGF1R, leading to IGF1R ubiquitination, increased internalization and degradation by both the proteasomal and lysosomal pathways. A similar role in the mediation of ubiquitination also has been suggested with INSR. Negatively regulates Wnt signaling by interacting with LRP6 intracellular portion and interfering with the binding of AXIN1 to LRP6. Positive regulator of the KDR/VEGFR-2 signaling pathway. May inhibit NEDD4-mediated degradation of KDR/VEGFR-2. The polypeptide is Growth factor receptor-bound protein 10 (Grb10) (Rattus norvegicus (Rat)).